A 142-amino-acid chain; its full sequence is Large ribosomal subunit protein uL13 (142 aa).

The protein belongs to the universal ribosomal protein uL13 family. As to quaternary structure, part of the 50S ribosomal subunit.

Functionally, this protein is one of the early assembly proteins of the 50S ribosomal subunit, although it is not seen to bind rRNA by itself. It is important during the early stages of 50S assembly. This is Large ribosomal subunit protein uL13 from Polaromonas sp. (strain JS666 / ATCC BAA-500).